A 265-amino-acid chain; its full sequence is Glutamate racemase (265 aa).

Residues 9 to 10 (DS) and 41 to 42 (YG) each bind substrate. Cys-73 acts as the Proton donor/acceptor in catalysis. 74 to 75 (NT) serves as a coordination point for substrate. The Proton donor/acceptor role is filled by Cys-180. Substrate is bound at residue 181–182 (TH).

It belongs to the aspartate/glutamate racemases family.

The catalysed reaction is L-glutamate = D-glutamate. The protein operates within cell wall biogenesis; peptidoglycan biosynthesis. Provides the (R)-glutamate required for cell wall biosynthesis. The polypeptide is Glutamate racemase (Aliivibrio salmonicida (strain LFI1238) (Vibrio salmonicida (strain LFI1238))).